A 268-amino-acid chain; its full sequence is Photosystem II 22 kDa protein 1, chloroplastic (268 aa).

The transit peptide at 1–60 (MAQSMLVSGANGTVAAASTSRLQPVRPTPFSRLVLSQPSSSLGRAVSVKTVALFGRSKTK) directs the protein to the chloroplast. 2 tandem repeats follow at residues 54-161 (FGRS…FVDD) and 164-268 (VTGL…DDEE). 4 consecutive transmembrane segments (helical) span residues 99-119 (VAML…KGIL), 133-153 (AEPL…GALG), 199-219 (LFVG…EIIT), and 234-254 (PINE…IAAI).

Belongs to the ELIP/psbS family. Expressed at low levels in leaves (at protein level).

The protein resides in the plastid. The protein localises to the chloroplast thylakoid membrane. In terms of biological role, involved in high light-mediated energy-dependent nonphotochemical quenching (NPQ, qE) and thermal dissipation (TD) thus regulating energy conversion in photosystem II and protecting from photoinhibition. Also seems to regulate quantum yield of electron transport in fluctuating light conditions. This chain is Photosystem II 22 kDa protein 1, chloroplastic, found in Oryza sativa subsp. indica (Rice).